A 431-amino-acid chain; its full sequence is Trigger factor (431 aa).

The region spanning 164 to 249 (GDIAVIDFKG…IKEIKRKELP (86 aa)) is the PPIase FKBP-type domain.

Belongs to the FKBP-type PPIase family. Tig subfamily.

It localises to the cytoplasm. The catalysed reaction is [protein]-peptidylproline (omega=180) = [protein]-peptidylproline (omega=0). Involved in protein export. Acts as a chaperone by maintaining the newly synthesized protein in an open conformation. Functions as a peptidyl-prolyl cis-trans isomerase. The protein is Trigger factor of Clostridium acetobutylicum (strain ATCC 824 / DSM 792 / JCM 1419 / IAM 19013 / LMG 5710 / NBRC 13948 / NRRL B-527 / VKM B-1787 / 2291 / W).